Reading from the N-terminus, the 188-residue chain is Adenine phosphoribosyltransferase (188 aa).

This sequence belongs to the purine/pyrimidine phosphoribosyltransferase family. As to quaternary structure, homodimer.

Its subcellular location is the cytoplasm. It carries out the reaction AMP + diphosphate = 5-phospho-alpha-D-ribose 1-diphosphate + adenine. The protein operates within purine metabolism; AMP biosynthesis via salvage pathway; AMP from adenine: step 1/1. Catalyzes a salvage reaction resulting in the formation of AMP, that is energically less costly than de novo synthesis. In Salinispora arenicola (strain CNS-205), this protein is Adenine phosphoribosyltransferase.